Reading from the N-terminus, the 94-residue chain is Cystatin-A1 (94 aa).

The Secondary area of contact motif lies at 45–49 (QLVAG).

This sequence belongs to the cystatin family.

The protein resides in the cytoplasm. Its function is as follows. Intracellular thiol proteinase inhibitor. Inhibits papain, but not cathepsin B. The polypeptide is Cystatin-A1 (cpiA) (Dictyostelium discoideum (Social amoeba)).